The primary structure comprises 61 residues: Photosystem II reaction center protein K (61 aa).

A propeptide spanning residues 1 to 24 (MLNIFSLICICLNSVLYSSSFFVA) is cleaved from the precursor. A helical membrane pass occupies residues 40 to 60 (MPVIPVLFFLLAFVWQAAVSF).

It belongs to the PsbK family. As to quaternary structure, PSII is composed of 1 copy each of membrane proteins PsbA, PsbB, PsbC, PsbD, PsbE, PsbF, PsbH, PsbI, PsbJ, PsbK, PsbL, PsbM, PsbT, PsbX, PsbY, PsbZ, Psb30/Ycf12, at least 3 peripheral proteins of the oxygen-evolving complex and a large number of cofactors. It forms dimeric complexes.

Its subcellular location is the plastid. It is found in the chloroplast thylakoid membrane. One of the components of the core complex of photosystem II (PSII). PSII is a light-driven water:plastoquinone oxidoreductase that uses light energy to abstract electrons from H(2)O, generating O(2) and a proton gradient subsequently used for ATP formation. It consists of a core antenna complex that captures photons, and an electron transfer chain that converts photonic excitation into a charge separation. The protein is Photosystem II reaction center protein K of Morus indica (Mulberry).